The primary structure comprises 552 residues: Low-affinity Fe(2+) transport protein (552 aa).

The Extracellular segment spans residues 1 to 97 (MGKIAEFLGN…DFLVRVAGSQ (97 aa)). A Glycyl lysine isopeptide (Lys-Gly) (interchain with G-Cter in ubiquitin) cross-link involves residue K39. 2 positions are modified to phosphoserine: S48 and S50. The chain crosses the membrane as a helical span at residues 98-118 (AVFFIVWIILIIWVVIGIVYN). Residues 119-225 (APFNWQVVMQ…SNVASRYMGS (107 aa)) lie on the Cytoplasmic side of the membrane. The helical transmembrane segment at 226–246 (IAAMVIFWIGIFVWIGCGAIP) threads the bilayer. Over 247–271 (KDAGNTPPYTGETTGSNPRLKKFSD) the chain is Extracellular. A helical transmembrane segment spans residues 272–292 (AWQMYINTAVAVSLLICTTFL). The Cytoplasmic segment spans residues 293–354 (QNIRARHDYF…GRKMIDWYAD (62 aa)). Residues 355-375 (IIGTGIGVLIGVAVFATWIGI) form a helical membrane-spanning segment. The Extracellular segment spans residues 376-383 (GSPMKWDD). The helical transmembrane segment at 384 to 404 (NWWLIIGTYTGLIGFLDGFVL) threads the bilayer. The Cytoplasmic portion of the chain corresponds to 405–465 (REVYFRIVQH…SQYINRICST (61 aa)). Residues 466–486 (PWSVLVSVIIIIGLICIASGL) traverse the membrane as a helical segment. The Extracellular portion of the chain corresponds to 487–493 (RWSTTGQ). The helical transmembrane segment at 494–514 (LIANTPTMIIEEFFLLVLLQA) threads the bilayer. Over 515–552 (HNWADRQRRVEVTALYARRRILLSYVEKRFPEVMMLEK) the chain is Cytoplasmic.

The protein belongs to the FET4 family.

The protein localises to the membrane. Required for Fe(2+) ion low affinity uptake. This chain is Low-affinity Fe(2+) transport protein (FET4), found in Saccharomyces cerevisiae (strain ATCC 204508 / S288c) (Baker's yeast).